Consider the following 196-residue polypeptide: ECF RNA polymerase sigma factor SigM (196 aa).

The tract at residues leucine 39–lysine 105 is sigma-70 factor domain-2. The Polymerase core binding signature appears at aspartate 63 to glutamine 66. Positions alanine 130–leucine 181 are sigma-70 factor domain-4. The H-T-H motif DNA-binding region spans isoleucine 156–alanine 175.

It belongs to the sigma-70 factor family. ECF subfamily. Interacts transiently with the RNA polymerase catalytic core formed by RpoA, RpoB, RpoC and RpoZ (2 alpha, 1 beta, 1 beta' and 1 omega subunit) to form the RNA polymerase holoenzyme that can initiate transcription. Interacts (via sigma-70 factor domain-4) with anti-sigma-M factor RsmA (AC L7N5D7).

In terms of biological role, sigma factors are initiation factors that promote the attachment of RNA polymerase to specific initiation sites and are then released. Extracytoplasmic function (ECF) sigma factors are held in an inactive form by an anti-sigma factor (RsaM, AC L7N5D7) until released by regulated intramembrane proteolysis. This sigma factor is required for the synthesis of surface or secreted molecules. This is ECF RNA polymerase sigma factor SigM (sigM) from Mycobacterium tuberculosis (strain ATCC 25618 / H37Rv).